The primary structure comprises 334 residues: Holliday junction branch migration complex subunit RuvB (334 aa).

A large ATPase domain (RuvB-L) region spans residues 1–181 (MQDRLISGTE…FGIVQRLEFY (181 aa)). ATP is bound by residues isoleucine 20, arginine 21, glycine 62, lysine 65, threonine 66, threonine 67, 128–130 (EDY), arginine 171, tyrosine 181, and arginine 218. Residue threonine 66 coordinates Mg(2+). The interval 182 to 252 (SVEDLTHIVS…MAQRALDMLN (71 aa)) is small ATPAse domain (RuvB-S). A head domain (RuvB-H) region spans residues 255–334 (KAGLDTLDRR…FGMTPPEPKN (80 aa)). The DNA site is built by arginine 310 and arginine 315.

This sequence belongs to the RuvB family. Homohexamer. Forms an RuvA(8)-RuvB(12)-Holliday junction (HJ) complex. HJ DNA is sandwiched between 2 RuvA tetramers; dsDNA enters through RuvA and exits via RuvB. An RuvB hexamer assembles on each DNA strand where it exits the tetramer. Each RuvB hexamer is contacted by two RuvA subunits (via domain III) on 2 adjacent RuvB subunits; this complex drives branch migration. In the full resolvosome a probable DNA-RuvA(4)-RuvB(12)-RuvC(2) complex forms which resolves the HJ.

It localises to the cytoplasm. It catalyses the reaction ATP + H2O = ADP + phosphate + H(+). Its function is as follows. The RuvA-RuvB-RuvC complex processes Holliday junction (HJ) DNA during genetic recombination and DNA repair, while the RuvA-RuvB complex plays an important role in the rescue of blocked DNA replication forks via replication fork reversal (RFR). RuvA specifically binds to HJ cruciform DNA, conferring on it an open structure. The RuvB hexamer acts as an ATP-dependent pump, pulling dsDNA into and through the RuvAB complex. RuvB forms 2 homohexamers on either side of HJ DNA bound by 1 or 2 RuvA tetramers; 4 subunits per hexamer contact DNA at a time. Coordinated motions by a converter formed by DNA-disengaged RuvB subunits stimulates ATP hydrolysis and nucleotide exchange. Immobilization of the converter enables RuvB to convert the ATP-contained energy into a lever motion, pulling 2 nucleotides of DNA out of the RuvA tetramer per ATP hydrolyzed, thus driving DNA branch migration. The RuvB motors rotate together with the DNA substrate, which together with the progressing nucleotide cycle form the mechanistic basis for DNA recombination by continuous HJ branch migration. Branch migration allows RuvC to scan DNA until it finds its consensus sequence, where it cleaves and resolves cruciform DNA. The protein is Holliday junction branch migration complex subunit RuvB of Acinetobacter baumannii (strain AB307-0294).